The sequence spans 203 residues: MSSPLECAKYLLSAHTTHQLPADDGSEVAFAGRSNAGKSSVLNTLTRQNALARVSKTPGRTQQLVYFTVTPQRYLVDLPGYGYAKVPKELQIHWQTFIDSYFHQRQALRGLVVVMDIRHPLKEYDLQMLAYARQRGLPAQALLTKADKLGRGQQAQTLQKVRNELTKHFADHINIQTFSSKSRQGVEQLHTVIETWLGLARLA.

The EngB-type G domain maps to 24-199; the sequence is DGSEVAFAGR…HTVIETWLGL (176 aa). Residues 32 to 39, 59 to 63, 77 to 80, 144 to 147, and 178 to 180 contribute to the GTP site; these read GRSNAGKS, GRTQQ, DLPG, TKAD, and FSS. Mg(2+)-binding residues include Ser39 and Thr61.

This sequence belongs to the TRAFAC class TrmE-Era-EngA-EngB-Septin-like GTPase superfamily. EngB GTPase family. The cofactor is Mg(2+).

Functionally, necessary for normal cell division and for the maintenance of normal septation. This Xylella fastidiosa (strain 9a5c) protein is Probable GTP-binding protein EngB.